The primary structure comprises 1356 residues: Partitioning defective 3 homolog (1356 aa).

Ser25 is modified (phosphoserine). 2 disordered regions span residues 81–100 (EQDP…GTQS) and 154–262 (SVSD…GLEH). Residue Thr91 is modified to Phosphothreonine. The segment covering 91-100 (TSASSTGTQS) has biased composition (low complexity). Composition is skewed to polar residues over residues 154–163 (SVSDSNFSSE) and 171–187 (TRWS…TAGS). Phosphoserine occurs at positions 156 and 174. Basic and acidic residues predominate over residues 190 to 203 (TCDRKKDENYRSLP). The span at 204-224 (RDTSNWSNQFQRDNARSSLSA) shows a compositional bias: polar residues. Residues 246 to 260 (DNSRVEPVGHADTGL) show a composition bias toward basic and acidic residues. A PDZ 1 domain is found at 271–359 (MVKLVEVPND…TPIIWFHVVP (89 aa)). A Phosphoserine modification is found at Ser383. Positions 408–448 (LNHPPEQIDSHSRLPHSAHPSGKPPSAPASAPQNVFSTTVS) are disordered. PDZ domains follow at residues 461–546 (NIQL…LVFR) and 590–677 (EVPL…GMIQ). Tyr489 bears the Phosphotyrosine mark. Residues Ser692, Ser695, Ser715, Ser728, Ala792, Ser809, and Ser827 each carry the phosphoserine modification. The tract at residues 712 to 936 (RRISHSLYSG…AAIDKSYDKP (225 aa)) is interaction with PRKCI and PRKCZ. An N6-acetyllysine modification is found at Lys834. A Phosphoserine modification is found at Ser837. Residue Lys851 is modified to N6-acetyllysine. Ser852 and Ser873 each carry phosphoserine. 2 disordered regions span residues 865 to 886 (TVDD…GLKK) and 932 to 1025 (SYDK…DMFR). Lys885 is subject to N6-acetyllysine. An interaction with FRMD4A region spans residues 935–1356 (KPAVDDDDEG…TPEKGRPFYS (422 aa)). The span at 939 to 953 (DDDDEGMETLEEDTE) shows a compositional bias: acidic residues. The residue at position 962 (Ser962) is a Phosphoserine; by AURKA. Residues 968–982 (DQPSHSLERQMNGNQ) are compositionally biased toward polar residues. Ser971 and Ser973 each carry phosphoserine. Basic and acidic residues predominate over residues 983–1009 (EKGDKTDRKKDKTGKEKKKDRDKEKDK). Ser1046 is subject to Phosphoserine. A coiled-coil region spans residues 1049-1077 (SEEERIRMKQEQERIQAKTREFRERQARE). The segment at 1129–1356 (QVKKPRNSKP…TPEKGRPFYS (228 aa)) is disordered. Positions 1136–1149 (SKPSPVDSNRSTPS) are enriched in polar residues. Residues 1150–1177 (NHDRIQRLRQEFQQAKQDEDVEDRRRTY) are compositionally biased toward basic and acidic residues. 3 coiled-coil regions span residues 1151-1174 (HDRI…EDRR), 1201-1224 (VQMQ…YSSL), and 1280-1301 (MLET…MKKQ). The span at 1196–1205 (SVSVEVQMQR) shows a compositional bias: low complexity. Residues 1221 to 1245 (YSSLPRQSRKNASSVSQDSWEQNYS) are compositionally biased toward polar residues. Residues 1285-1298 (ELLRQEQRRKEQQM) show a composition bias toward basic and acidic residues. Over residues 1337–1346 (SQVARLNRLQ) the composition is skewed to polar residues. Residues 1347-1356 (TPEKGRPFYS) show a composition bias toward basic and acidic residues. The residue at position 1350 (Lys1350) is an N6-acetyllysine.

This sequence belongs to the PAR3 family. As to quaternary structure, interacts (via PDZ 1 domain) with F11R/JAM1, PARD6A and PARD6B. Interacts with PRCKI and CDH5. Interacts (via PDZ 3 domain) with PTEN (via C-terminus). Part of a complex with PARD6A or PARD6B, PRKCI or PRKCZ and CDC42 or RAC1. Component of a complex whose core is composed of ARHGAP17, AMOT, PALS1, PATJ and PARD3/PAR3. Interacts with LIMK2, AURKA and AURKB. Component of the Par polarity complex, composed of at least phosphorylated PRKCZ, PARD3 and TIAM1. Directly interacts with TIAM1 and TIAM2. Interacts with ECT2, FBF1 and SIRT2. Interacts (via coiled-coil domain) with FRMD4A. Found in a complex with PARD3, CYTH1 and FRMD4A. Interacts with SAPCD2. Interacts with PRKCA. Interacts with PRKCZ. Post-translationally, acetylated. Deacetylated by SIRT2, thereby inhibiting Schwann cell peripheral myelination. Phosphorylation at Ser-827 by PRKCZ and PRKCI occurs at the most apical tip of epithelial cell-cell contacts during the initial phase of tight junction formation and may promote dissociation of the complex with PARD6. EGF-induced Tyr-1127 phosphorylation mediates dissociation from LIMK2. Phosphorylation by AURKA at Ser-962 is required for the normal establishment of neuronal polarity. Widely expressed.

It is found in the cytoplasm. It localises to the endomembrane system. The protein resides in the cell junction. Its subcellular location is the tight junction. The protein localises to the adherens junction. It is found in the cell membrane. It localises to the cell cortex. The protein resides in the cytoskeleton. Functionally, adapter protein involved in asymmetrical cell division and cell polarization processes. Seems to play a central role in the formation of epithelial tight junctions. Targets the phosphatase PTEN to cell junctions. Involved in Schwann cell peripheral myelination. Association with PARD6B may prevent the interaction of PARD3 with F11R/JAM1, thereby preventing tight junction assembly. The PARD6-PARD3 complex links GTP-bound Rho small GTPases to atypical protein kinase C proteins. Required for establishment of neuronal polarity and normal axon formation in cultured hippocampal neurons. The protein is Partitioning defective 3 homolog of Homo sapiens (Human).